The sequence spans 230 residues: Orotidine 5'-phosphate decarboxylase (230 aa).

Substrate is bound by residues Asp-11, Lys-34, 61–70 (DLKLHDIPNT), Thr-117, Arg-179, Gln-188, Gly-208, and Arg-209. Lys-63 serves as the catalytic Proton donor.

Belongs to the OMP decarboxylase family. Type 1 subfamily. In terms of assembly, homodimer.

The enzyme catalyses orotidine 5'-phosphate + H(+) = UMP + CO2. Its pathway is pyrimidine metabolism; UMP biosynthesis via de novo pathway; UMP from orotate: step 2/2. Functionally, catalyzes the decarboxylation of orotidine 5'-monophosphate (OMP) to uridine 5'-monophosphate (UMP). This chain is Orotidine 5'-phosphate decarboxylase, found in Streptococcus uberis (strain ATCC BAA-854 / 0140J).